The following is a 227-amino-acid chain: LexA repressor (227 aa).

A DNA-binding region (H-T-H motif) is located at residues 25–45; the sequence is FDEMKDALDLRSKSGIHRLIT. Active-site for autocatalytic cleavage activity residues include Ser148 and Lys186.

The protein belongs to the peptidase S24 family. As to quaternary structure, homodimer.

The catalysed reaction is Hydrolysis of Ala-|-Gly bond in repressor LexA.. Functionally, represses a number of genes involved in the response to DNA damage (SOS response), including recA and lexA. In the presence of single-stranded DNA, RecA interacts with LexA causing an autocatalytic cleavage which disrupts the DNA-binding part of LexA, leading to derepression of the SOS regulon and eventually DNA repair. This chain is LexA repressor, found in Cereibacter sphaeroides (strain ATCC 17029 / ATH 2.4.9) (Rhodobacter sphaeroides).